We begin with the raw amino-acid sequence, 183 residues long: Troponin I, fast skeletal muscle (183 aa).

An N-acetylserine modification is found at Ser-2. The segment at Ser-2 to His-48 is involved in binding TNC. Positions Ser-97–Met-117 are involved in binding TNC and actin.

This sequence belongs to the troponin I family. In terms of assembly, binds to actin and tropomyosin. In terms of processing, the N-terminus is blocked.

Troponin I is the inhibitory subunit of troponin, the thin filament regulatory complex which confers calcium-sensitivity to striated muscle actomyosin ATPase activity. The sequence is that of Troponin I, fast skeletal muscle (TNNI2) from Gallus gallus (Chicken).